The primary structure comprises 314 residues: Acetaldehyde dehydrogenase 1/2 (314 aa).

12–15 (SGNI) serves as a coordination point for NAD(+). C130 functions as the Acyl-thioester intermediate in the catalytic mechanism. NAD(+)-binding positions include 161–169 (SAGPGTRAN) and N288.

It belongs to the acetaldehyde dehydrogenase family.

It catalyses the reaction acetaldehyde + NAD(+) + CoA = acetyl-CoA + NADH + H(+). The polypeptide is Acetaldehyde dehydrogenase 1/2 (Rhizorhabdus wittichii (strain DSM 6014 / CCUG 31198 / JCM 15750 / NBRC 105917 / EY 4224 / RW1) (Sphingomonas wittichii)).